A 378-amino-acid chain; its full sequence is Cytochrome b (378 aa).

4 helical membrane-spanning segments follow: residues Ser-33 to Met-53, Trp-77 to Ile-98, Xaa-113 to Leu-133, and Phe-178 to Ile-198. His-83 and His-97 together coordinate heme b. His-196 is a binding site for heme b. His-201 is an a ubiquinone binding site. The next 4 helical transmembrane spans lie at Phe-226–Ser-246, Leu-288–His-308, Leu-320–Gly-340, and Phe-347–Pro-367.

Belongs to the cytochrome b family. As to quaternary structure, the cytochrome bc1 complex contains 3 respiratory subunits (MT-CYB, CYC1 and UQCRFS1), 2 core proteins (UQCRC1 and UQCRC2) and probably 6 low-molecular weight proteins. Heme b is required as a cofactor.

The protein localises to the mitochondrion inner membrane. In terms of biological role, component of the ubiquinol-cytochrome c reductase complex (complex III or cytochrome b-c1 complex) that is part of the mitochondrial respiratory chain. The b-c1 complex mediates electron transfer from ubiquinol to cytochrome c. Contributes to the generation of a proton gradient across the mitochondrial membrane that is then used for ATP synthesis. This chain is Cytochrome b (mt-cyb), found in Nannacara anomala (Goldeneye cichlid).